We begin with the raw amino-acid sequence, 517 residues long: Bifunctional purine biosynthesis protein PurH (517 aa).

An MGS-like domain is found at 1 to 146 (MGRLVLLSVS…KNFAHLTVLC (146 aa)).

This sequence belongs to the PurH family.

The enzyme catalyses (6R)-10-formyltetrahydrofolate + 5-amino-1-(5-phospho-beta-D-ribosyl)imidazole-4-carboxamide = 5-formamido-1-(5-phospho-D-ribosyl)imidazole-4-carboxamide + (6S)-5,6,7,8-tetrahydrofolate. It carries out the reaction IMP + H2O = 5-formamido-1-(5-phospho-D-ribosyl)imidazole-4-carboxamide. It functions in the pathway purine metabolism; IMP biosynthesis via de novo pathway; 5-formamido-1-(5-phospho-D-ribosyl)imidazole-4-carboxamide from 5-amino-1-(5-phospho-D-ribosyl)imidazole-4-carboxamide (10-formyl THF route): step 1/1. Its pathway is purine metabolism; IMP biosynthesis via de novo pathway; IMP from 5-formamido-1-(5-phospho-D-ribosyl)imidazole-4-carboxamide: step 1/1. The chain is Bifunctional purine biosynthesis protein PurH from Gloeothece citriformis (strain PCC 7424) (Cyanothece sp. (strain PCC 7424)).